We begin with the raw amino-acid sequence, 304 residues long: Ribonuclease BN (304 aa).

Zn(2+) contacts are provided by His-63, His-65, Asp-67, His-68, His-140, Asp-211, and His-269. Asp-67 functions as the Proton acceptor in the catalytic mechanism.

It belongs to the RNase Z family. RNase BN subfamily. As to quaternary structure, homodimer. Zn(2+) serves as cofactor.

In terms of biological role, zinc phosphodiesterase, which has both exoribonuclease and endoribonuclease activities. The protein is Ribonuclease BN of Erwinia tasmaniensis (strain DSM 17950 / CFBP 7177 / CIP 109463 / NCPPB 4357 / Et1/99).